Here is a 276-residue protein sequence, read N- to C-terminus: D-apionate oxidoisomerase (276 aa).

NAD(+)-binding positions include 12-14, E33, and D69; that span reads GKM. H114 and E184 together coordinate Zn(2+).

Belongs to the ApnO family. Zn(2+) serves as cofactor.

It catalyses the reaction D-apionate + NAD(+) = 3-oxoisoapionate + NADH + H(+). The protein operates within carbohydrate metabolism. Its function is as follows. Involved in catabolism of D-apiose. Catalyzes the conversion of D-apionate to 3-oxo-isoapionate. The protein is D-apionate oxidoisomerase of Cupriavidus necator (strain ATCC 43291 / DSM 13513 / CCUG 52238 / LMG 8453 / N-1) (Ralstonia eutropha).